The following is a 168-amino-acid chain: uncharacterized protein (168 aa).

The next 4 helical transmembrane spans lie at 1-21 (MFWL…AVAR), 41-61 (PYII…VLLM), 68-88 (WWLG…WALC), and 123-143 (VILE…MCLF).

It is found in the cell membrane. This is an uncharacterized protein from Bacillus subtilis (strain 168).